A 444-amino-acid chain; its full sequence is Elongation factor 1-alpha (444 aa).

Positions 15–236 (KPHLNLAVIG…ALDTFQPPPR (222 aa)) constitute a tr-type G domain. The G1 stretch occupies residues 24 to 31 (GHVDNGKS). 24–31 (GHVDNGKS) lines the GTP pocket. Serine 31 contacts Mg(2+). The segment at 80 to 84 (GVTIE) is G2. The interval 101–104 (DLPG) is G3. GTP contacts are provided by residues 101-105 (DLPGH) and 163-166 (NKMD). The G4 stretch occupies residues 163–166 (NKMD). The tract at residues 202 to 204 (SAI) is G5.

Belongs to the TRAFAC class translation factor GTPase superfamily. Classic translation factor GTPase family. EF-Tu/EF-1A subfamily.

The protein localises to the cytoplasm. The catalysed reaction is GTP + H2O = GDP + phosphate + H(+). Its function is as follows. GTP hydrolase that promotes the GTP-dependent binding of aminoacyl-tRNA to the A-site of ribosomes during protein biosynthesis. This Pyrobaculum islandicum (strain DSM 4184 / JCM 9189 / GEO3) protein is Elongation factor 1-alpha.